The chain runs to 202 residues: Orotate phosphoribosyltransferase (202 aa).

5-phospho-alpha-D-ribose 1-diphosphate-binding positions include R94, K98, H100, and 120–128 (EDLISTGGS). Orotate is bound at residue S124.

This sequence belongs to the purine/pyrimidine phosphoribosyltransferase family. PyrE subfamily. As to quaternary structure, homodimer. Mg(2+) is required as a cofactor.

It carries out the reaction orotidine 5'-phosphate + diphosphate = orotate + 5-phospho-alpha-D-ribose 1-diphosphate. The protein operates within pyrimidine metabolism; UMP biosynthesis via de novo pathway; UMP from orotate: step 1/2. Catalyzes the transfer of a ribosyl phosphate group from 5-phosphoribose 1-diphosphate to orotate, leading to the formation of orotidine monophosphate (OMP). This Oceanobacillus iheyensis (strain DSM 14371 / CIP 107618 / JCM 11309 / KCTC 3954 / HTE831) protein is Orotate phosphoribosyltransferase.